The sequence spans 329 residues: Ribosomal RNA small subunit methyltransferase C (329 aa).

It belongs to the methyltransferase superfamily. RsmC family. Monomer.

The protein localises to the cytoplasm. It catalyses the reaction guanosine(1207) in 16S rRNA + S-adenosyl-L-methionine = N(2)-methylguanosine(1207) in 16S rRNA + S-adenosyl-L-homocysteine + H(+). Functionally, specifically methylates the guanine in position 1207 of 16S rRNA in the 30S particle. The polypeptide is Ribosomal RNA small subunit methyltransferase C (Actinobacillus pleuropneumoniae serotype 5b (strain L20)).